The sequence spans 416 residues: Na(+)/H(+) antiporter NhaA (416 aa).

11 consecutive transmembrane segments (helical) span residues Gly-39–Ala-59, Leu-82–Ile-102, Leu-119–Val-139, Gly-146–Gly-166, Val-175–Phe-195, Gly-198–Leu-218, Ala-234–Leu-254, Pro-281–Gly-301, Leu-315–Ala-335, Trp-353–Ile-373, and Gly-390–Gln-410.

Belongs to the NhaA Na(+)/H(+) (TC 2.A.33) antiporter family.

It localises to the cell inner membrane. The enzyme catalyses Na(+)(in) + 2 H(+)(out) = Na(+)(out) + 2 H(+)(in). In terms of biological role, na(+)/H(+) antiporter that extrudes sodium in exchange for external protons. In Acidovorax sp. (strain JS42), this protein is Na(+)/H(+) antiporter NhaA.